A 253-amino-acid polypeptide reads, in one-letter code: Phosphate import ATP-binding protein PstB (253 aa).

The region spanning 5–248 is the ABC transporter domain; that stretch reads IETINLHVYY…PEHELTEKYV (244 aa). 37-44 contributes to the ATP binding site; the sequence is GPSGCGKS.

The protein belongs to the ABC transporter superfamily. Phosphate importer (TC 3.A.1.7) family. The complex is composed of two ATP-binding proteins (PstB), two transmembrane proteins (PstC and PstA) and a solute-binding protein (PstS).

The protein localises to the cell membrane. The catalysed reaction is phosphate(out) + ATP + H2O = ADP + 2 phosphate(in) + H(+). In terms of biological role, part of the ABC transporter complex PstSACB involved in phosphate import. Responsible for energy coupling to the transport system. In Pyrococcus furiosus (strain ATCC 43587 / DSM 3638 / JCM 8422 / Vc1), this protein is Phosphate import ATP-binding protein PstB.